The following is a 505-amino-acid chain: Glutamate--tRNA ligase (505 aa).

Residues 12–22 (PSPTGDPHVGT) carry the 'HIGH' region motif. Residues 253-257 (KLSKR) carry the 'KMSKS' region motif. Residue Lys256 coordinates ATP.

This sequence belongs to the class-I aminoacyl-tRNA synthetase family. Glutamate--tRNA ligase type 1 subfamily. In terms of assembly, monomer.

It is found in the cytoplasm. It carries out the reaction tRNA(Glu) + L-glutamate + ATP = L-glutamyl-tRNA(Glu) + AMP + diphosphate. Its function is as follows. Catalyzes the attachment of glutamate to tRNA(Glu) in a two-step reaction: glutamate is first activated by ATP to form Glu-AMP and then transferred to the acceptor end of tRNA(Glu). This chain is Glutamate--tRNA ligase, found in Chlamydophila psittaci (strain ATCC VR-125 / 6BC) (Chlamydia psittaci).